Reading from the N-terminus, the 970-residue chain is Longitudinals lacking protein, isoforms F/I/K/T (970 aa).

A BTB domain is found at 32-97 (VDCTLAAEGK…MYRGEVNISQ (66 aa)). 4 disordered regions span residues 115–200 (LSDN…SSVL), 228–340 (SSGP…ASAS), 447–468 (DAQQRDPQASKQDKGEQTEGAQ), and 790–843 (QTVH…LQDD). 4 stretches are compositionally biased toward low complexity: residues 162–175 (SGDVSGSREGSSSP), 228–251 (SSGPAAGTSSQASSTQQQQPLTST), 263–293 (TSSTAAPASGASASAAVQQAHLHQQQAQTTS), and 329–340 (NSATGPNPASAS). Polar residues-rich tracts occupy residues 447 to 456 (DAQQRDPQAS) and 808 to 818 (QLQTHHIQTVV). Residues 819 to 828 (QSSSGQQQHD) are compositionally biased toward low complexity. The C2H2-type 1; degenerate zinc-finger motif lies at 903–925 (YVCRHCGKKYRWKSTLRRHENVE). A C2H2-type 2 zinc finger spans residues 933 to 955 (HPCPYCSYKAKQRGNLGVHVRKH).

In terms of tissue distribution, by stage 11, isoform F is expressed throughout the mesoderm whereas isoform T, and at low levels isoform I, is expressed throughout the ectoderm. Isoform K is expressed in both mesoderm and ectoderm. Expression becomes restricted during later stages; starting from stage 14 to 15, isoform F is expressed in the gut. Isoform I is expressed in the CNS. Isoform I and isoform F show expression in the epithelium starting at stage 14, though for isoform I the CNS expression remains predominant. Expression is also seen in specific types of cells in the embryo; isoform K is expressed in the ventral furrow at stage 5 and in a dynamic pattern in the ventral neurogenic region starting at stage 7. Isoform T is expressed around the tracheal pits at stage 11. Isoform F shows transient enrichment in a dorsal cell layer in the CNS at stages 13 and 14.

The protein resides in the nucleus. Its function is as follows. Putative transcription factor required for axon growth and guidance in the central and peripheral nervous systems. Repels CNS axons away from the midline by promoting the expression of the midline repellent sli and its receptor robo. The chain is Longitudinals lacking protein, isoforms F/I/K/T from Drosophila melanogaster (Fruit fly).